We begin with the raw amino-acid sequence, 347 residues long: NADH-ubiquinone oxidoreductase chain 2 (347 aa).

9 helical membrane-spanning segments follow: residues 3-23 (PMTF…VMMS), 59-79 (YFLT…INLL), 89-109 (LINP…LGLA), 150-170 (NLNI…WGGL), 178-198 (IMAY…MYNP), 201-221 (MLLN…LLMI), 237-257 (LPLI…LPPL), 276-296 (IILS…YTRI), and 326-346 (LPLM…TAIL).

Belongs to the complex I subunit 2 family. In terms of assembly, core subunit of respiratory chain NADH dehydrogenase (Complex I) which is composed of 45 different subunits. Interacts with TMEM242.

It is found in the mitochondrion inner membrane. It catalyses the reaction a ubiquinone + NADH + 5 H(+)(in) = a ubiquinol + NAD(+) + 4 H(+)(out). Its function is as follows. Core subunit of the mitochondrial membrane respiratory chain NADH dehydrogenase (Complex I) which catalyzes electron transfer from NADH through the respiratory chain, using ubiquinone as an electron acceptor. Essential for the catalytic activity and assembly of complex I. The chain is NADH-ubiquinone oxidoreductase chain 2 from Nyctophilus arnhemensis (Northern long-eared bat).